The sequence spans 165 residues: Probable DNA polymerase III subunit chi (165 aa).

This sequence belongs to the DNA polymerase III chi/HolC chain family. As to quaternary structure, DNA polymerase III contains a core (composed of alpha, epsilon and theta chains) that associates with a tau subunit. This core dimerizes to form the POLIII' complex. PolIII' associates with the gamma complex (composed of gamma, delta, delta', psi and chi chains) and with the beta chain to form the complete DNA polymerase III complex. Interacts directly with the psi subunit (holD). The only subunit of the DNA polymerase III holoenzyme known to interact with single-stranded DNA binding protein (SSB).

It catalyses the reaction DNA(n) + a 2'-deoxyribonucleoside 5'-triphosphate = DNA(n+1) + diphosphate. In terms of biological role, part of the beta sliding clamp loading complex, which hydrolyzes ATP to load the beta clamp onto primed DNA to form the DNA replication pre-initiation complex. DNA polymerase III is a complex, multichain enzyme responsible for most of the replicative synthesis in bacteria. This DNA polymerase also exhibits 3' to 5' exonuclease activity. The sequence is that of Probable DNA polymerase III subunit chi from Rickettsia prowazekii (strain Madrid E).